The following is a 244-amino-acid chain: Phosphoadenosine 5'-phosphosulfate reductase (244 aa).

Cys239 functions as the Nucleophile; cysteine thiosulfonate intermediate in the catalytic mechanism.

Belongs to the PAPS reductase family. CysH subfamily.

It localises to the cytoplasm. The catalysed reaction is [thioredoxin]-disulfide + sulfite + adenosine 3',5'-bisphosphate + 2 H(+) = [thioredoxin]-dithiol + 3'-phosphoadenylyl sulfate. The protein operates within sulfur metabolism; hydrogen sulfide biosynthesis; sulfite from sulfate: step 3/3. Functionally, catalyzes the formation of sulfite from phosphoadenosine 5'-phosphosulfate (PAPS) using thioredoxin as an electron donor. The polypeptide is Phosphoadenosine 5'-phosphosulfate reductase (Sodalis glossinidius (strain morsitans)).